We begin with the raw amino-acid sequence, 197 residues long: MIFSISKRKLICGFSLVALTIAGIVGGVYLVTKNNQQTTPQTNHFNVADPVNKVPNWRKLGPETQRELRDLLYPLDDTGYFIYKYGAISRYLQSQKELDELVDYRTVLPSTQKHFKYDSFNQSVLESKLRKWLMKAIKQHPYFQHFEFDPVLKAQYNINIPAQKITVNAVWFYKKDNDLTTGKPIRYWDQFEIKLKQ.

Residues 11-31 (ICGFSLVALTIAGIVGGVYLV) form a helical membrane-spanning segment.

The protein localises to the membrane. This is an uncharacterized protein from Mycoplasma pneumoniae (strain ATCC 29342 / M129 / Subtype 1) (Mycoplasmoides pneumoniae).